The primary structure comprises 413 residues: MAVNFPSIDPAQLHPVAGVTLGWAEANIRKPNRKDVLVVSVEEGATVSGVFTENRFCAAPVTVCREHLAKVRAGGAGIRALVVNTGNANAGTGEPGLAHARETCAELARLAGIAPGQVLPFSTGVILEPLPIERLKAGLPAALANRAAANWHDAAQAIMTTDTLPKAASRQVTIDGHTITLTGISKGAGMIKPNMATMLGFLAFDAKVAQPVLDALVKDVADRSFNCITIDGDTSTNDSFILIASGKASLPQIASTDSPAYAALREAVTAVAQALAQLIVRDGEGATKFITVTVEGGKSAAECRQIAYAIGHSPLVKTAFYASDPNLGRILAAIGYAGVADLDVGKIDLYLDDVLVAKAGGRNPAYLEEDGQRVMKQSEIAVRVLLGRGDAQATIWTCDLSHDYVSINADYRS.

6 residues coordinate substrate: Thr-160, Lys-186, Thr-197, Glu-284, Asn-408, and Ser-413. Residue Thr-197 is the Nucleophile of the active site.

This sequence belongs to the ArgJ family. In terms of assembly, heterotetramer of two alpha and two beta chains.

It is found in the cytoplasm. It catalyses the reaction N(2)-acetyl-L-ornithine + L-glutamate = N-acetyl-L-glutamate + L-ornithine. The catalysed reaction is L-glutamate + acetyl-CoA = N-acetyl-L-glutamate + CoA + H(+). The protein operates within amino-acid biosynthesis; L-arginine biosynthesis; L-ornithine and N-acetyl-L-glutamate from L-glutamate and N(2)-acetyl-L-ornithine (cyclic): step 1/1. It functions in the pathway amino-acid biosynthesis; L-arginine biosynthesis; N(2)-acetyl-L-ornithine from L-glutamate: step 1/4. In terms of biological role, catalyzes two activities which are involved in the cyclic version of arginine biosynthesis: the synthesis of N-acetylglutamate from glutamate and acetyl-CoA as the acetyl donor, and of ornithine by transacetylation between N(2)-acetylornithine and glutamate. This chain is Arginine biosynthesis bifunctional protein ArgJ, found in Burkholderia pseudomallei (strain 1710b).